A 319-amino-acid polypeptide reads, in one-letter code: BTB/POZ domain-containing adapter for CUL3-mediated RhoA degradation protein 2 (319 aa).

The BTB domain maps to 31 to 99 (KYIRLNVGGC…LRDDTITLPK (69 aa)).

The protein belongs to the BACURD family. In terms of assembly, component of the BCR(TNFAIP1) E3 ubiquitin ligase complex, at least composed of cul3, tnfaip1/bacurd2 and rbx1.

The protein resides in the cytoplasm. It localises to the nucleus. Its subcellular location is the endosome. It functions in the pathway protein modification; protein ubiquitination. In terms of biological role, substrate-specific adapter of a BCR (BTB-CUL3-RBX1) E3 ubiquitin-protein ligase complex involved in regulation of cytoskeleton structure. The BCR(TNFAIP1) E3 ubiquitin ligase complex mediates the ubiquitination of target proteins, leading to their degradation by the proteasome. The protein is BTB/POZ domain-containing adapter for CUL3-mediated RhoA degradation protein 2 (tnfaip1) of Xenopus tropicalis (Western clawed frog).